Here is a 319-residue protein sequence, read N- to C-terminus: MSDYQVLLYYKYTTIDDPETFAKEHLAACKEMELKGRILVATEGINGTVSGTVEATNKYMDYMANDARFADMVFKIDAADAHAFKKMHVRPRAEIVSLSLEEDVNPLEVTGTYLEPSEFREALLDEDTVILDARNDYEFDIGHFRGAVRPDIQNFRELPGWIEDNREQLADKKIVTYCTGGIRCEKFSGWLKTAGFDDVSQLHGGIATYGKNEETKGELWDGQMYVFDERIAVPINQVNPTIVGKDYFDGTPCERYINCANPYCNKQILASVENEKKYLRSCSHDCRVHPANLYTKNLSKEEFTERLQAIDETLPEMVQ.

Residues 124–218 (LDEDTVILDA…YGKNEETKGE (95 aa)) form the Rhodanese domain. The active-site Cysteine persulfide intermediate is the cysteine 178.

It belongs to the TrhO family.

The enzyme catalyses uridine(34) in tRNA + AH2 + O2 = 5-hydroxyuridine(34) in tRNA + A + H2O. Catalyzes oxygen-dependent 5-hydroxyuridine (ho5U) modification at position 34 in tRNAs. This chain is tRNA uridine(34) hydroxylase, found in Listeria monocytogenes serotype 4a (strain HCC23).